A 108-amino-acid chain; its full sequence is Large ribosomal subunit protein bL21 (108 aa).

This sequence belongs to the bacterial ribosomal protein bL21 family. As to quaternary structure, part of the 50S ribosomal subunit. Contacts protein L20.

In terms of biological role, this protein binds to 23S rRNA in the presence of protein L20. This is Large ribosomal subunit protein bL21 from Acidobacterium capsulatum (strain ATCC 51196 / DSM 11244 / BCRC 80197 / JCM 7670 / NBRC 15755 / NCIMB 13165 / 161).